The sequence spans 260 residues: Thrombin-like enzyme 2 (260 aa).

The signal sequence occupies residues 1–18 (MMLIRVLANLLILQLSYA). The propeptide occupies 19 to 24 (QKSSEL). A Peptidase S1 domain is found at 25 to 251 (VIGGDECNIN…HLDWIQSIIA (227 aa)). 6 cysteine pairs are disulfide-bonded: Cys-31/Cys-165, Cys-52/Cys-68, Cys-102/Cys-258, Cys-144/Cys-212, Cys-176/Cys-191, and Cys-202/Cys-227. The active-site Charge relay system is His-67. Asn-105 carries an N-linked (GlcNAc...) asparagine glycan. Catalysis depends on Asp-112, which acts as the Charge relay system. N-linked (GlcNAc...) asparagine glycosylation is found at Asn-156 and Asn-172. The Charge relay system role is filled by Ser-206. Asn-253 carries an N-linked (GlcNAc...) asparagine glycan.

This sequence belongs to the peptidase S1 family. Snake venom subfamily. In terms of assembly, monomer. Expressed by the venom gland.

It is found in the secreted. Its function is as follows. Thrombin-like snake venom serine protease. The sequence is that of Thrombin-like enzyme 2 from Trimeresurus albolabris (White-lipped pit viper).